A 273-amino-acid polypeptide reads, in one-letter code: Gap junction beta-5 protein (273 aa).

Topologically, residues 1–20 are cytoplasmic; that stretch reads MNWSIFEGLLSGVNKYSTAF. A helical membrane pass occupies residues 21–40; it reads GRIWLSLVFIFRVLVYLVTA. The Extracellular portion of the chain corresponds to 41 to 75; sequence ERVWSDDHKDFDCNTRQPGCSNVCFDEFFPVSHVR. Residues 76–98 form a helical membrane-spanning segment; it reads LWALQLILVTCPSLLVVMHVAYR. The Cytoplasmic segment spans residues 99–126; it reads EVQEKRHREAHGENSGRLYLNPGKKRGG. A helical transmembrane segment spans residues 127 to 149; the sequence is LWWTYVCSLVFKASVDIAFLYVF. Over 150 to 187 the chain is Extracellular; the sequence is HSFYPKYILPPVVKCHADPCPNIVDCFISKPSEKNIFT. A helical membrane pass occupies residues 188 to 210; that stretch reads LFMVATAAICILLNLVELIYLVS. The Cytoplasmic segment spans residues 211–273; the sequence is KRCHECLAAR…PRDHVKKTIL (63 aa).

This sequence belongs to the connexin family. Beta-type (group I) subfamily. In terms of assembly, a connexon is composed of a hexamer of connexins.

The protein localises to the cell membrane. It localises to the cell junction. Its subcellular location is the gap junction. In terms of biological role, one gap junction consists of a cluster of closely packed pairs of transmembrane channels, the connexons, through which materials of low MW diffuse from one cell to a neighboring cell. The sequence is that of Gap junction beta-5 protein (GJB5) from Homo sapiens (Human).